Here is a 194-residue protein sequence, read N- to C-terminus: Crossover junction endodeoxyribonuclease RuvC (194 aa).

Residues Asp-8, Glu-72, and Asp-144 contribute to the active site. Residues Asp-8, Glu-72, and Asp-144 each contribute to the Mg(2+) site.

This sequence belongs to the RuvC family. Homodimer which binds Holliday junction (HJ) DNA. The HJ becomes 2-fold symmetrical on binding to RuvC with unstacked arms; it has a different conformation from HJ DNA in complex with RuvA. In the full resolvosome a probable DNA-RuvA(4)-RuvB(12)-RuvC(2) complex forms which resolves the HJ. Mg(2+) serves as cofactor.

The protein localises to the cytoplasm. The enzyme catalyses Endonucleolytic cleavage at a junction such as a reciprocal single-stranded crossover between two homologous DNA duplexes (Holliday junction).. The RuvA-RuvB-RuvC complex processes Holliday junction (HJ) DNA during genetic recombination and DNA repair. Endonuclease that resolves HJ intermediates. Cleaves cruciform DNA by making single-stranded nicks across the HJ at symmetrical positions within the homologous arms, yielding a 5'-phosphate and a 3'-hydroxyl group; requires a central core of homology in the junction. The consensus cleavage sequence is 5'-(A/T)TT(C/G)-3'. Cleavage occurs on the 3'-side of the TT dinucleotide at the point of strand exchange. HJ branch migration catalyzed by RuvA-RuvB allows RuvC to scan DNA until it finds its consensus sequence, where it cleaves and resolves the cruciform DNA. This chain is Crossover junction endodeoxyribonuclease RuvC, found in Psychrobacter sp. (strain PRwf-1).